Consider the following 382-residue polypeptide: Saccharopine dehydrogenase [NAD(+), L-lysine-forming] (382 aa).

Residues Arg-20 and Lys-79 each coordinate L-saccharopine. Lys-79 (proton acceptor) is an active-site residue. The active-site Proton donor is the His-98. Position 103 (Gln-103) interacts with L-saccharopine. Residue Arg-132 coordinates NAD(+). 2 residues coordinate L-saccharopine: Arg-133 and Phe-137. NAD(+) contacts are provided by residues 215–216 (GR), Asp-239, Thr-243, Tyr-263, and Val-290. Cys-217 and Cys-261 are disulfide-bonded. 291 to 293 (SAD) serves as a coordination point for L-saccharopine. 330–333 (IDHL) lines the NAD(+) pocket.

Belongs to the AlaDH/PNT family. In terms of assembly, monomer.

It catalyses the reaction L-saccharopine + NAD(+) + H2O = L-lysine + 2-oxoglutarate + NADH + H(+). It functions in the pathway amino-acid biosynthesis; L-lysine biosynthesis via AAA pathway; L-lysine from L-alpha-aminoadipate (fungal route): step 3/3. Its function is as follows. Catalyzes the NAD(+)-dependent cleavage of saccharopine to L-lysine and 2-oxoglutarate, the final step in the alpha-aminoadipate (AAA) pathway for lysin biosynthesis. The chain is Saccharopine dehydrogenase [NAD(+), L-lysine-forming] from Candida albicans (strain SC5314 / ATCC MYA-2876) (Yeast).